Reading from the N-terminus, the 419-residue chain is Histidine--tRNA ligase (419 aa).

Belongs to the class-II aminoacyl-tRNA synthetase family.

The protein resides in the cytoplasm. The enzyme catalyses tRNA(His) + L-histidine + ATP = L-histidyl-tRNA(His) + AMP + diphosphate + H(+). The polypeptide is Histidine--tRNA ligase (Pyrobaculum arsenaticum (strain DSM 13514 / JCM 11321 / PZ6)).